A 364-amino-acid chain; its full sequence is Chorismate synthase (364 aa).

Arginine 47 is a binding site for NADP(+). FMN is bound by residues 125–127 (RAS), glycine 288, 303–307 (KPTAT), and arginine 329.

Belongs to the chorismate synthase family. In terms of assembly, homotetramer. FMNH2 is required as a cofactor.

The catalysed reaction is 5-O-(1-carboxyvinyl)-3-phosphoshikimate = chorismate + phosphate. It functions in the pathway metabolic intermediate biosynthesis; chorismate biosynthesis; chorismate from D-erythrose 4-phosphate and phosphoenolpyruvate: step 7/7. Its function is as follows. Catalyzes the anti-1,4-elimination of the C-3 phosphate and the C-6 proR hydrogen from 5-enolpyruvylshikimate-3-phosphate (EPSP) to yield chorismate, which is the branch point compound that serves as the starting substrate for the three terminal pathways of aromatic amino acid biosynthesis. This reaction introduces a second double bond into the aromatic ring system. This Synechococcus sp. (strain CC9902) protein is Chorismate synthase.